The chain runs to 368 residues: Quinolinate synthase (368 aa).

The iminosuccinate site is built by His-46 and Ser-63. Cys-110 contributes to the [4Fe-4S] cluster binding site. Residues 141-143 and Ser-162 each bind iminosuccinate; that span reads YVN. Cys-230 is a [4Fe-4S] cluster binding site. Residues 256–258 and Thr-273 contribute to the iminosuccinate site; that span reads HPE. A [4Fe-4S] cluster-binding site is contributed by Cys-320.

This sequence belongs to the quinolinate synthase family. Type 3 subfamily. The cofactor is [4Fe-4S] cluster.

The protein localises to the cytoplasm. It carries out the reaction iminosuccinate + dihydroxyacetone phosphate = quinolinate + phosphate + 2 H2O + H(+). Its pathway is cofactor biosynthesis; NAD(+) biosynthesis; quinolinate from iminoaspartate: step 1/1. In terms of biological role, catalyzes the condensation of iminoaspartate with dihydroxyacetone phosphate to form quinolinate. The polypeptide is Quinolinate synthase (Bacillus mycoides (strain KBAB4) (Bacillus weihenstephanensis)).